The following is a 196-amino-acid chain: Lipoprotein signal peptidase (196 aa).

The next 3 membrane-spanning stretches (helical) occupy residues 43–63 (LMLKVTAFLNMVYTWNYGISF), 75–95 (AVFILTNSIIVCYLYYLMVCS), and 100–120 (GFAGYSFVIGGAVGNLIDRLF). Active-site residues include Asp126 and Asp144. A helical transmembrane segment spans residues 135–155 (YSFPVFNLADCFITIGVIILI).

It belongs to the peptidase A8 family.

The protein localises to the cell inner membrane. It carries out the reaction Release of signal peptides from bacterial membrane prolipoproteins. Hydrolyzes -Xaa-Yaa-Zaa-|-(S,diacylglyceryl)Cys-, in which Xaa is hydrophobic (preferably Leu), and Yaa (Ala or Ser) and Zaa (Gly or Ala) have small, neutral side chains.. The protein operates within protein modification; lipoprotein biosynthesis (signal peptide cleavage). Its function is as follows. This protein specifically catalyzes the removal of signal peptides from prolipoproteins. The chain is Lipoprotein signal peptidase from Rickettsia canadensis (strain McKiel).